Here is a 52-residue protein sequence, read N- to C-terminus: Large ribosomal subunit protein bL33 (52 aa).

This sequence belongs to the bacterial ribosomal protein bL33 family.

The chain is Large ribosomal subunit protein bL33 from Anaeromyxobacter dehalogenans (strain 2CP-C).